We begin with the raw amino-acid sequence, 449 residues long: Sensor histidine protein kinase/phosphatase WalK (449 aa).

The Extracellular portion of the chain corresponds to 1–13 (MLDLLKQTIFTRD). Residues 14–34 (FIFILILLGFILVVTLLLLEN) form a helical membrane-spanning segment. The HAMP domain occupies 35 to 87 (RRDNIQLKQINQKVKDLIAGDYSKVLDMQGGSEITNITNNLNDLSEVIRLTQE). Residues 35-449 (RRDNIQLKQI…EEVWEDEVED (415 aa)) are Cytoplasmic-facing. In terms of domain architecture, PAS spans 92-158 (ESKRLNSILF…YELRDLITQS (67 aa)). In terms of domain architecture, PAC spans 157–211 (QSPELLLDSQDINGEYLNLRVRFALIRRESGFISGLVAVLHDTTEQEKEERERRL). Positions 215-435 (NVSHELRTPL…TFTIVLPYDK (221 aa)) constitute a Histidine kinase domain. Position 218 is a phosphohistidine (His-218).

In terms of assembly, may form homodimers. May interact with serine/threonine-protein kinase StkP; the interaction may play a role in regulating Walk signal transduction. Autophosphorylated.

The protein localises to the membrane. It catalyses the reaction ATP + protein L-histidine = ADP + protein N-phospho-L-histidine.. In terms of biological role, member of the two-component regulatory system WalK/WalR that regulates genes involved in cell wall metabolism. Functions as a sensor protein kinase which is autophosphorylated at a histidine residue and transfers its phosphate group to WalR. In turn, WalR binds to the upstream promoter regions of target genes to positively and negatively regulate their expression. Required to maintain expression of WalRK regulon genes in exponentially growing cells, including peptidoglycan hydrolase pcsB. Phosphorylates WalR and also capable of dephosphorylation of WalR. WalK phosphatase activity is probably involved in preventing cross-talk from PnpS and other non-cognate sensor kinases during exponential growth. May be considered a potential virulence factor. This chain is Sensor histidine protein kinase/phosphatase WalK, found in Streptococcus pneumoniae serotype 2 (strain D39 / NCTC 7466).